A 206-amino-acid chain; its full sequence is Pyridoxine/pyridoxamine 5'-phosphate oxidase (206 aa).

FMN contacts are provided by residues 55–60, 70–71, Arg-76, Lys-77, and Gln-99; these read RVVLLK and YT. Lys-60 lines the substrate pocket. 3 residues coordinate substrate: Tyr-117, Arg-121, and Ser-125. Residues 134 to 135 and Trp-179 contribute to the FMN site; that span reads QS. 185–187 is a substrate binding site; it reads RLH. Arg-189 contributes to the FMN binding site.

Belongs to the pyridoxamine 5'-phosphate oxidase family. Homodimer. It depends on FMN as a cofactor.

It catalyses the reaction pyridoxamine 5'-phosphate + O2 + H2O = pyridoxal 5'-phosphate + H2O2 + NH4(+). The catalysed reaction is pyridoxine 5'-phosphate + O2 = pyridoxal 5'-phosphate + H2O2. It participates in cofactor metabolism; pyridoxal 5'-phosphate salvage; pyridoxal 5'-phosphate from pyridoxamine 5'-phosphate: step 1/1. It functions in the pathway cofactor metabolism; pyridoxal 5'-phosphate salvage; pyridoxal 5'-phosphate from pyridoxine 5'-phosphate: step 1/1. In terms of biological role, catalyzes the oxidation of either pyridoxine 5'-phosphate (PNP) or pyridoxamine 5'-phosphate (PMP) into pyridoxal 5'-phosphate (PLP). The chain is Pyridoxine/pyridoxamine 5'-phosphate oxidase from Myxococcus xanthus (strain DK1622).